Reading from the N-terminus, the 93-residue chain is Protein S100-A8 (93 aa).

2 consecutive EF-hand domains span residues 12–47 (IIDV…QYIR) and 46–81 (IRKK…MGVA). Zn(2+) is bound by residues His-17 and His-27. Asp-33 provides a ligand contact to Ca(2+). S-nitrosocysteine is present on Cys-42. Residues Asp-59, Asn-61, Asp-63, and Glu-70 each coordinate Ca(2+). Zn(2+) is bound by residues His-83 and His-87.

This sequence belongs to the S-100 family. As to quaternary structure, homodimer. Preferentially exists as a heterodimer or heterotetramer with S100A9 known as calprotectin (S100A8/A9). S100A8 interacts with AGER, ATP2A2 and with the heterodimeric complex formed by TLR4 and LY96. Interacts with GAPDH. Calprotectin (S100A8/9) interacts with CEACAM3 and tubulin filaments in a calcium-dependent manner. Heterotetrameric calprotectin (S100A8/A9) interacts with ANXA6 and associates with tubulin filaments in activated monocytes. S100A8 and calprotectin (S100A8/9) interact with NCF2/P67PHOX, RAC1 and RAC2. Calprotectin (S100A8/9) interacts with CYBA and CYBB. Calprotectin (S100A8/9) interacts with NOS2 to form the iNOS-S100A8/A9 transnitrosylase complex; induced by LDL(ox). Calprotectin (S100A8/9) interacts with CD69. In terms of tissue distribution, calprotectin (S100A8/9) is predominantly expressed in myeloid cells. Except for inflammatory conditions, the expression is restricted to a specific stage of myeloid differentiation since both proteins are expressed in circulating neutrophils and monocytes but are absent in normal tissue macrophages and lymphocytes. Under chronic inflammatory conditions, such as psoriasis and malignant disorders, also expressed in the epidermis. Found in high concentrations at local sites of inflammation or in the serum of patients with inflammatory diseases such as rheumatoid, cystic fibrosis, inflammatory bowel disease, Crohn's disease, giant cell arteritis, cystic fibrosis, Sjogren's syndrome, systemic lupus erythematosus, and progressive systemic sclerosis. Involved in the formation and deposition of amyloids in the aging prostate known as corpora amylacea inclusions. Strongly up-regulated in many tumors, including gastric, esophageal, colon, pancreatic, bladder, ovarian, thyroid, breast and skin cancers.

Its subcellular location is the secreted. The protein localises to the cytoplasm. The protein resides in the cytoskeleton. It localises to the cell membrane. Calprotectin (S100A8/A9) activity on TLR4 signaling is inhibited by paquinimod. Its function is as follows. S100A8 is a calcium- and zinc-binding protein which plays a prominent role in the regulation of inflammatory processes and immune response. It can induce neutrophil chemotaxis and adhesion. Predominantly found as calprotectin (S100A8/A9) which has a wide plethora of intra- and extracellular functions. The intracellular functions include: facilitating leukocyte arachidonic acid trafficking and metabolism, modulation of the tubulin-dependent cytoskeleton during migration of phagocytes and activation of the neutrophilic NADPH-oxidase. Also participates in regulatory T-cell differentiation together with CD69. Activates NADPH-oxidase by facilitating the enzyme complex assembly at the cell membrane, transferring arachidonic acid, an essential cofactor, to the enzyme complex and S100A8 contributes to the enzyme assembly by directly binding to NCF2/P67PHOX. The extracellular functions involve pro-inflammatory, antimicrobial, oxidant-scavenging and apoptosis-inducing activities. Its pro-inflammatory activity includes recruitment of leukocytes, promotion of cytokine and chemokine production, and regulation of leukocyte adhesion and migration. Acts as an alarmin or a danger associated molecular pattern (DAMP) molecule and stimulates innate immune cells via binding to pattern recognition receptors such as Toll-like receptor 4 (TLR4) and receptor for advanced glycation endproducts (AGER). Binding to TLR4 and AGER activates the MAP-kinase and NF-kappa-B signaling pathways resulting in the amplification of the pro-inflammatory cascade. Has antimicrobial activity towards bacteria and fungi and exerts its antimicrobial activity probably via chelation of Zn(2+) which is essential for microbial growth. Can induce cell death via autophagy and apoptosis and this occurs through the cross-talk of mitochondria and lysosomes via reactive oxygen species (ROS) and the process involves BNIP3. Can regulate neutrophil number and apoptosis by an anti-apoptotic effect; regulates cell survival via ITGAM/ITGB and TLR4 and a signaling mechanism involving MEK-ERK. Its role as an oxidant scavenger has a protective role in preventing exaggerated tissue damage by scavenging oxidants. Can act as a potent amplifier of inflammation in autoimmunity as well as in cancer development and tumor spread. The iNOS-S100A8/A9 transnitrosylase complex directs selective inflammatory stimulus-dependent S-nitrosylation of GAPDH and probably multiple targets such as ANXA5, EZR, MSN and VIM by recognizing a [IL]-x-C-x-x-[DE] motif; S100A8 seems to contribute to S-nitrosylation site selectivity. (Microbial infection) Upon infection by human coronavirus SARS-CoV-2, may induce expansion of aberrant immature neutrophils in a TLR4-dependent manner. The polypeptide is Protein S100-A8 (Homo sapiens (Human)).